Reading from the N-terminus, the 390-residue chain is MAAGRGERAGQSAEGPKQYRLIGAEAVLARTLRAFTDCPLIGTIAVVIHPDDHALYRRAVPEKHENVILVTGGPTRQESTRLGLLALKDEAPQYVLIHDGVRPFIGQDLLERIIANLTPDNGVLPALAVPDTLKRAAADGMVETTISRTGLFAAQTPQAFPYAPILDAHEKAFAINRTDFTDDAAIAEWQEIAVRIIEGSADNTKLTWAKDIEMADKRLRQDHAVFPDIRTGNGYDVHSFEPGDHVTLCGVKIPHEAKLNGHSDADVALHALTDALLATRGAGDIGTHFPPSDSQWKGAASRIFIEHAAKIVREAGGRIANVDVTLISEAPKIGPHRAAMTQALCDMLGIAADRVSIKATTNEKLGFVGRREGIAAIATATVIYPGEVPE.

A 2-C-methyl-D-erythritol 4-phosphate cytidylyltransferase region spans residues 1-229; sequence MAAGRGERAG…RQDHAVFPDI (229 aa). Residues 230–390 form a 2-C-methyl-D-erythritol 2,4-cyclodiphosphate synthase region; sequence RTGNGYDVHS…TVIYPGEVPE (161 aa). A divalent metal cation is bound by residues Asp-236 and His-238. 4-CDP-2-C-methyl-D-erythritol 2-phosphate-binding positions include 236–238 and 262–263; these read DVH and HS. His-270 contacts a divalent metal cation. Residues 284 to 286, 360 to 363, Phe-367, and Arg-370 each bind 4-CDP-2-C-methyl-D-erythritol 2-phosphate; these read DIG and TTNE.

In the N-terminal section; belongs to the IspD/TarI cytidylyltransferase family. IspD subfamily. The protein in the C-terminal section; belongs to the IspF family. It depends on a divalent metal cation as a cofactor.

The catalysed reaction is 2-C-methyl-D-erythritol 4-phosphate + CTP + H(+) = 4-CDP-2-C-methyl-D-erythritol + diphosphate. It carries out the reaction 4-CDP-2-C-methyl-D-erythritol 2-phosphate = 2-C-methyl-D-erythritol 2,4-cyclic diphosphate + CMP. It participates in isoprenoid biosynthesis; isopentenyl diphosphate biosynthesis via DXP pathway; isopentenyl diphosphate from 1-deoxy-D-xylulose 5-phosphate: step 2/6. Its pathway is isoprenoid biosynthesis; isopentenyl diphosphate biosynthesis via DXP pathway; isopentenyl diphosphate from 1-deoxy-D-xylulose 5-phosphate: step 4/6. Its function is as follows. Bifunctional enzyme that catalyzes the formation of 4-diphosphocytidyl-2-C-methyl-D-erythritol from CTP and 2-C-methyl-D-erythritol 4-phosphate (MEP) (IspD), and catalyzes the conversion of 4-diphosphocytidyl-2-C-methyl-D-erythritol 2-phosphate (CDP-ME2P) to 2-C-methyl-D-erythritol 2,4-cyclodiphosphate (ME-CPP) with a corresponding release of cytidine 5-monophosphate (CMP) (IspF). The polypeptide is Bifunctional enzyme IspD/IspF (Brucella suis biovar 1 (strain 1330)).